A 345-amino-acid polypeptide reads, in one-letter code: AP2-like ethylene-responsive transcription factor At1g16060 (345 aa).

Positions 15 to 62 (TRQSKKTSVENETGDDQSATSVVLKAKRKRRSQPRDAPPQRSSVHRGV) are disordered. DNA-binding regions (AP2/ERF) lie at residues 58 to 124 (VHRG…LNFP) and 160 to 218 (KYRG…TNFD). A disordered region spans residues 243 to 302 (HSDLSPFIKPNHESDLSQSQSSSEDNDDRKTKLLKSSPLVAEEVIGPSTPPEIAPPRRSF).

Belongs to the AP2/ERF transcription factor family. AP2 subfamily.

Its subcellular location is the nucleus. Probably acts as a transcriptional activator. Binds to the GCC-box pathogenesis-related promoter element. May be involved in the regulation of gene expression by stress factors and by components of stress signal transduction pathways. The sequence is that of AP2-like ethylene-responsive transcription factor At1g16060 from Arabidopsis thaliana (Mouse-ear cress).